Consider the following 275-residue polypeptide: Echotoxin-2 (275 aa).

The signal sequence occupies residues 1-23 (MKRNILALVVVVALISQSRPAES). A plays an important role in the hemolytic activity region spans residues 23 to 32 (SAGGTIIATL). An N-terminal region region spans residues 49-67 (ETGASVASAAAAATSSDYS). Phosphocholine-binding residues include Gly-123, Ser-141, Pro-143, Tyr-176, and Tyr-177. The trp-rich region, which is important for the binding to lipid membrane stretch occupies residues 141–156 (SAPYNFDFYSNWLAVG). The propeptide occupies 249-275 (RAIQQELARRAEEEKQRKRKALDEMLK).

It belongs to the actinoporin family. Sea anemone subfamily. As to quaternary structure, octamer or nonamer in membranes. Monomer in the soluble state. As to expression, salivary gland.

It is found in the secreted. It localises to the nematocyst. Its subcellular location is the target cell membrane. Functionally, pore-forming protein that forms cations-selective hydrophilic pores of around 1 nm and causes cardiac stimulation and cytolysis. Pore formation is a multi-step process that involves specific recognition of membrane sphingomyelin (but neither cholesterol nor phosphatidylcholine) using aromatic rich region and adjacent phosphocholine (POC) binding site, firm binding to the membrane (mainly driven by hydrophobic interactions) accompanied by the transfer of the N-terminal region to the lipid-water interface and finally pore formation after oligomerization of monomers. Exhibits both hemolytic and lethal activities. Gangliosides potently inhibits the hemolytic activity. This is Echotoxin-2 from Monoplex parthenopeus (Giant triton).